The chain runs to 550 residues: Major fimbrium tip subunit FimE (550 aa).

Residues 1-21 (MKSKSIIAQLLYVLIAFMAVS) form the signal peptide. Cysteine 22 carries the N-palmitoyl cysteine lipid modification. The S-diacylglycerol cysteine moiety is linked to residue cysteine 22. Residues 22-51 (CVADKSEPCPSGEPTRVSGSIVSLEHHGLR) constitute a propeptide that is removed on maturation.

Belongs to the FimE family. Fimbriae are composed of a major, structural subunit and the minor components FimC, FimD and FimE. Identified in a complex composed of FimC, FimD and FimE (in vitro). Does not directly interact with host proteins, but only as a complex with FimC and FimD.

It localises to the fimbrium. The protein resides in the cell outer membrane. Functionally, probably a component of the fimbrium tip; required for incorporation of FimC and FimD into fimbriae. These long, filamentous pili are attached to the cell surface; they mediate biofilm formation, adhesion onto host cells and onto other bacteria that are part of the oral microbiome. They play an important role in invasion of periodontal tissues and are major virulence factors. FimC, FimD and FimE contribute to interaction with host CXCR4 and thereby down-regulate the TLR2-mediated host immune response. In Porphyromonas gingivalis (strain ATCC 33277 / DSM 20709 / CIP 103683 / JCM 12257 / NCTC 11834 / 2561), this protein is Major fimbrium tip subunit FimE.